The primary structure comprises 630 residues: 1-deoxy-D-xylulose-5-phosphate synthase (630 aa).

Residues histidine 73 and 114–116 (SHA) each bind thiamine diphosphate. Aspartate 146 contributes to the Mg(2+) binding site. Thiamine diphosphate is bound by residues 147 to 148 (GA), asparagine 176, phenylalanine 287, and glutamate 371. Mg(2+) is bound at residue asparagine 176.

Belongs to the transketolase family. DXPS subfamily. As to quaternary structure, homodimer. Mg(2+) is required as a cofactor. Thiamine diphosphate serves as cofactor.

It catalyses the reaction D-glyceraldehyde 3-phosphate + pyruvate + H(+) = 1-deoxy-D-xylulose 5-phosphate + CO2. The protein operates within metabolic intermediate biosynthesis; 1-deoxy-D-xylulose 5-phosphate biosynthesis; 1-deoxy-D-xylulose 5-phosphate from D-glyceraldehyde 3-phosphate and pyruvate: step 1/1. Catalyzes the acyloin condensation reaction between C atoms 2 and 3 of pyruvate and glyceraldehyde 3-phosphate to yield 1-deoxy-D-xylulose-5-phosphate (DXP). The chain is 1-deoxy-D-xylulose-5-phosphate synthase from Corynebacterium jeikeium (strain K411).